Consider the following 180-residue polypeptide: Bifunctional protein PyrR (180 aa).

Residues Val101–Thr113 carry the PRPP-binding motif.

It belongs to the purine/pyrimidine phosphoribosyltransferase family. PyrR subfamily. In terms of assembly, homodimer and homohexamer; in equilibrium.

It catalyses the reaction UMP + diphosphate = 5-phospho-alpha-D-ribose 1-diphosphate + uracil. In terms of biological role, regulates transcriptional attenuation of the pyrimidine nucleotide (pyr) operon by binding in a uridine-dependent manner to specific sites on pyr mRNA. This disrupts an antiterminator hairpin in the RNA and favors formation of a downstream transcription terminator, leading to a reduced expression of downstream genes. Also displays a weak uracil phosphoribosyltransferase activity which is not physiologically significant. The chain is Bifunctional protein PyrR from Bacillus mycoides (strain KBAB4) (Bacillus weihenstephanensis).